The sequence spans 432 residues: Interleukin-11 receptor subunit alpha-1 (432 aa).

An N-terminal signal peptide occupies residues 1-23; it reads MSSSCSGLTRVLVAVATALVSSS. Topologically, residues 24 to 372 are extracellular; that stretch reads SPCPQAWGPP…DPLEQVAVLA (349 aa). An Ig-like C2-type domain is found at 27–110; that stretch reads PQAWGPPGVQ…SGGMVTLKLG (84 aa). 3 cysteine pairs are disulfide-bonded: cysteine 48/cysteine 94, cysteine 120/cysteine 130, and cysteine 170/cysteine 180. 2 consecutive Fibronectin type-III domains span residues 112–219 and 220–317; these read PPAR…LRPD and PPQG…TPST. Asparagine 127 carries N-linked (GlcNAc...) asparagine glycosylation. The disordered stretch occupies residues 151–170; sequence KTLPGAESQRESPSTGPWPC. Residue asparagine 194 is glycosylated (N-linked (GlcNAc...) asparagine). Residues 304 to 308 carry the WSXWS motif motif; that stretch reads WSAWS. Disordered stretches follow at residues 309 to 332 and 342 to 361; these read PEAW…QGHG and EDSP…PLDH. Residues 373-393 traverse the membrane as a helical segment; it reads SLGIFSCLGLAVGALALGLWL. The Cytoplasmic segment spans residues 394 to 432; that stretch reads RLRRSGKDGPQKPGLLAPMIPVEKLPGIPNLQRTPENFS.

It belongs to the type I cytokine receptor family. Type 3 subfamily. On IL11 binding, forms a multimer complex with IL6ST/gp130. In terms of processing, a short soluble form is also released from the membrane by proteolysis. The sIL11RA is formed either by limited proteolysis of membrane-bound receptors, a process referred to as ectodomain shedding, or directly secreted from the cells after alternative mRNA splicing. mIL11RA is cleaved by the proteases ADAM10, ELANE and PRTN3. In terms of tissue distribution, widely expressed in all adult tissues and in embryos. Highest levels in kidney, skeletal muscle and embryo.

The protein localises to the membrane. The protein resides in the secreted. Functionally, receptor for interleukin-11. The receptor systems for IL6, LIF, OSM, CNTF, IL11 and CT1 can utilize IL6ST for initiating signal transmission. The IL11/IL11RA/IL6ST complex may be involved in the control of proliferation and/or differentiation of skeletogenic progenitor or other mesenchymal cells. Essential for the normal development of craniofacial bones and teeth. In terms of biological role, soluble form of IL11 receptor (sIL11RA) that acts as an agonist of IL11 activity. The IL11:sIL11RA complex binds to IL6ST/gp130 on cell surfaces and induces signaling also on cells that do not express membrane-bound IL11RA in a process called IL11 trans-signaling. The chain is Interleukin-11 receptor subunit alpha-1 from Mus musculus (Mouse).